Here is a 274-residue protein sequence, read N- to C-terminus: Methionine-binding lipoprotein MetQ (274 aa).

The first 19 residues, methionine 1–alanine 19, serve as a signal peptide directing secretion. Cysteine 20 is lipidated: N-palmitoyl cysteine. A lipid anchor (S-diacylglycerol cysteine) is attached at cysteine 20.

The protein belongs to the NlpA lipoprotein family. The complex is composed of two ATP-binding proteins (MetN), two transmembrane proteins (MetP) and a solute-binding protein (metQ).

It is found in the cell membrane. Part of the ABC transporter complex MetNPQ involved in methionine import. Binds the methionine and transfers it to the membrane-bound permease. It has also been shown to be involved in methionine sulfoxide transport. This is Methionine-binding lipoprotein MetQ (metQ) from Bacillus subtilis (strain 168).